A 561-amino-acid polypeptide reads, in one-letter code: Methyl-accepting chemotaxis protein CtpM (561 aa).

The Cytoplasmic portion of the chain corresponds to 1 to 11; the sequence is MMRLTLKSKVL. A helical membrane pass occupies residues 12–32; sequence LLAMVPVLLFALVLSGGAVLI. Topologically, residues 33–205 are periplasmic; the sequence is LKKQADAEVK…KQDIDERIGT (173 aa). The helical transmembrane segment at 206–226 threads the bilayer; it reads LIASIVGIAGVLLVVLLVIGL. Residues 227 to 561 lie on the Cytoplasmic side of the membrane; it reads AVANAMLRPL…LGRLVGQFRI (335 aa). Residues 230 to 284 enclose the HAMP domain; sequence NAMLRPLHQIRQNLDDIAAGEGDLTRRLPVTSYDELGELAGSFNRFVEKIHGLVR. Positions 289-525 constitute a Methyl-accepting transducer domain; it reads MTGDLKQLVE…EINRSVHQIA (237 aa). A disordered region spans residues 333–357; that stretch reads HEVAQSAQRAAEAAQQTDHEGQAAK. Over residues 336–348 the composition is skewed to low complexity; it reads AQSAQRAAEAAQQ.

It belongs to the methyl-accepting chemotaxis (MCP) protein family. Homodimer. The ligand-binding domain (LBD) is dimeric in the presence and the absence of ligands.

Its subcellular location is the cell inner membrane. In terms of biological role, chemotactic-signal transducers respond to changes in the concentration of attractants and repellents in the environment, transduce a signal from the outside to the inside of the cell, and facilitate sensory adaptation through the variation of the level of methylation. Directly recognizes five C4-dicarboxylic acids: L-malic, citramalic, citraconic, bromosuccinic and methylsuccinic acids. Three of the identified ligands act as chemoattractants (L-malic, D,L-bromosuccinic and L-citramalic acids) whereas two of them (L-methylsuccinic and citraconic acids) behave as antagonists by inhibiting the downstream chemotaxis signaling cascade. Antagonists compete with chemoattractants, thereby decreasing the affinity for chemoattractants and the subsequent chemotactic response. Acts through the che chemosensory pathway. In Pseudomonas aeruginosa (strain ATCC 15692 / DSM 22644 / CIP 104116 / JCM 14847 / LMG 12228 / 1C / PRS 101 / PAO1), this protein is Methyl-accepting chemotaxis protein CtpM.